The following is a 258-amino-acid chain: Clathrin light chain 3 (258 aa).

Over residues methionine 1–serine 18 the composition is skewed to polar residues. The tract at residues methionine 1–glutamate 96 is disordered. Serine 2 is modified (N-acetylserine). The span at serine 34–serine 50 shows a compositional bias: low complexity. A compositionally biased stretch (polar residues) spans arginine 66 to aspartate 79. Residues serine 90–arginine 152 are involved in binding clathrin heavy chain. Positions arginine 105–lysine 164 form a coiled coil. Positions leucine 224–proline 234 are enriched in basic residues. The segment at leucine 224–leucine 258 is disordered. The segment covering valine 246–leucine 258 has biased composition (polar residues).

Belongs to the clathrin light chain family. Clathrin coats are formed from molecules containing 3 heavy chains and 3 light chains.

It localises to the cytoplasmic vesicle membrane. It is found in the membrane. Its subcellular location is the coated pit. Clathrin is the major protein of the polyhedral coat of coated pits and vesicles. The sequence is that of Clathrin light chain 3 from Arabidopsis thaliana (Mouse-ear cress).